The chain runs to 314 residues: Oxaloacetate tautomerase FAHD2B, mitochondrial (314 aa).

Residues 1–84 (MLVSGRRRLL…ATLSVARRAL (84 aa)) constitute a mitochondrion transit peptide. The Mg(2+) site is built by Glu159, Glu161, and Asp190.

Belongs to the FAH family. It depends on Mg(2+) as a cofactor. Requires Mn(2+) as cofactor.

It localises to the mitochondrion. It carries out the reaction oxaloacetate = enol-oxaloacetate. Functionally, tautomerase that converts enol-oxaloacetate, a strong inhibitor of succinate dehydrogenase, to the physiological keto form of oxaloacetate. It is thereby required to maximize aerobic respiration efficiency by preventing succinate dehydrogenase inhibition. The polypeptide is Oxaloacetate tautomerase FAHD2B, mitochondrial (Homo sapiens (Human)).